The primary structure comprises 176 residues: Large ribosomal subunit protein uL16 (176 aa).

It belongs to the universal ribosomal protein uL16 family.

The chain is Large ribosomal subunit protein uL16 from Thermoplasma acidophilum (strain ATCC 25905 / DSM 1728 / JCM 9062 / NBRC 15155 / AMRC-C165).